We begin with the raw amino-acid sequence, 133 residues long: Small ribosomal subunit protein uS8 (133 aa).

Belongs to the universal ribosomal protein uS8 family. Part of the 30S ribosomal subunit. Contacts proteins S5 and S12.

Functionally, one of the primary rRNA binding proteins, it binds directly to 16S rRNA central domain where it helps coordinate assembly of the platform of the 30S subunit. The sequence is that of Small ribosomal subunit protein uS8 from Chloroflexus aggregans (strain MD-66 / DSM 9485).